The primary structure comprises 146 residues: Endoribonuclease YbeY (146 aa).

Residues histidine 108, histidine 112, and histidine 118 each contribute to the Zn(2+) site.

Belongs to the endoribonuclease YbeY family. The cofactor is Zn(2+).

It is found in the cytoplasm. Functionally, single strand-specific metallo-endoribonuclease involved in late-stage 70S ribosome quality control and in maturation of the 3' terminus of the 16S rRNA. This is Endoribonuclease YbeY from Aster yellows witches'-broom phytoplasma (strain AYWB).